Consider the following 457-residue polypeptide: MDKLNKITVPASQKLRQLQKMVHDIKNNEGGIMDKIKKLKVKGPPSVPRRDYALDSPADEEEQWSDDFDSDYENPDEHSDSEMYVMPAEETGDDSYEPPPAEQQTRVVHPALPFTRGEYVDNRSSQRHSPPFSKTLPSKPSWPSAKARLASTLPAPNSLQKPQVPPKPKDLLEDEADYVVPVEDNDENYIHPRESSPPPAEKAPMVNRSTKPNSSSKHMSPPGTVAGRNSGVWDSKSSLPAAPSPLPRAGKKPATPLKTTPVPPLPNASNVCEEKPVPAERHRGSSHRQDTVQSPVFPPTQKPVHQKPVPLPRFPEAGSPAADGPFHSFPFNSTFADQEAELLGKPWYAGACDRKSAEEALHRSNKDGSFLIRKSSGHDSKQPYTLVAFFNKRVYNIPVRFIEATKQYALGKKKNGEEYFGSVVEIVNSHQHNPLVLIDSQNNTKDSTRLKYAVKVS.

The interval 36–306 is disordered; that stretch reads IKKLKVKGPP…FPPTQKPVHQ (271 aa). Residues 57-74 are compositionally biased toward acidic residues; sequence PADEEEQWSDDFDSDYEN. 5 positions are modified to phosphotyrosine; by SYK: Tyr72, Tyr84, Tyr96, Tyr178, and Tyr189. Residues 172 to 187 are compositionally biased toward acidic residues; sequence LEDEADYVVPVEDNDE. A compositionally biased stretch (polar residues) spans 207–218; that stretch reads NRSTKPNSSSKH. Residues 272–290 are compositionally biased toward basic and acidic residues; it reads CEEKPVPAERHRGSSHRQD. Positions 347–454 constitute an SH2 domain; it reads WYAGACDRKS…KDSTRLKYAV (108 aa).

In terms of assembly, associates with PLCG1, VAV1 and NCK1 in a B-cell antigen receptor-dependent fashion. Interacts with VAV3, PLCG2 and GRB2. Interacts through its SH2 domain with CD79A. Interacts (via SH2 domain) with SYK; phosphorylated and activated by SYK. Interacts (via SH2 domain) with SCIMP; this interaction is dependent on phosphorylation of SCIMP 'Tyr-120'. Following BCR activation, phosphorylated on tyrosine residues by SYK and LYN. When phosphorylated, serves as a scaffold to assemble downstream targets of antigen activation, including PLCG1, VAV1, GRB2 and NCK1. Phosphorylation of Tyr-84, Tyr-178 and Tyr-189 facilitates PLCG1 binding. Phosphorylation of Tyr-72 facilitates VAV1 and NCK1 binding. Phosphorylation is required for both Ca(2+) and MAPK signaling pathways. Phosphorylation of Tyr-96 is required for the binding of BTK. Expressed in the spleen and weakly in thymus, no expression was seen in liver, testis, or brain. Expressed in B-cell lines representing different developmental stages from the pre-B to the plasma cell stage, but not in a T-cell or a fibroblast cell line.

It localises to the cytoplasm. Its subcellular location is the cell membrane. Its function is as follows. Functions as a central linker protein, downstream of the B-cell receptor (BCR), bridging the SYK kinase to a multitude of signaling pathways and regulating biological outcomes of B-cell function and development. Plays a role in the activation of ERK/EPHB2, MAP kinase p38 and JNK. Modulates AP1 activation. Important for the activation of NF-kappa-B and NFAT. Plays an important role in BCR-mediated PLCG1 and PLCG2 activation and Ca(2+) mobilization and is required for trafficking of the BCR to late endosomes. However, does not seem to be required for pre-BCR-mediated activation of MAP kinase and phosphatidyl-inositol 3 (PI3) kinase signaling. May be required for the RAC1-JNK pathway. Plays a critical role in orchestrating the pro-B cell to pre-B cell transition. May play an important role in BCR-induced B-cell apoptosis. This chain is B-cell linker protein (Blnk), found in Mus musculus (Mouse).